The primary structure comprises 440 residues: Tetratricopeptide repeat protein 5 (440 aa).

5 TPR repeats span residues 7-61, 68-98, 103-130, 136-174, and 179-216; these read EEVK…EEVV, AQVL…AVKL, VEAW…SGAL, KVSL…AVQM, and GRSW…AEKV. Residues 13–24 carry the Nuclear export signal motif; that stretch reads LQKLQELVDQLY. Position 203 is a phosphoserine; by ATM (Ser-203). At Ser-221 the chain carries Phosphoserine; by CHEK2. One copy of the TPR 6 repeat lies at 224 to 253; it reads PDLHLNRATLHKYEENYGEALEGFSRAAAL. Residues 285 to 287 form a mediates interaction with 28S rRNA of ribosome-coding tubulin region; the sequence is KTK.

As to quaternary structure, interacts with JMY and p300/EP300; the interaction occurs in the nucleus and augments the association between JMY and p300/EP300 in response to DNA damage. Interacts with PRMT5; the interaction is DNA damage-dependent and promotes PRMT5 interaction with p53/TP53 and subsequent methylation. Forms a complex with HSF1 and p300/EP300; these interactions augment chromatin-bound HSF1 and p300/EP300 histone acetyltransferase activity, resulting in enhanced heat-shock-responsive transcription. Interacts with JMY; the interaction occurs in the cytoplasm and results in the inhibition of JYM's nucleation activity. Interacts with ribosome-coding tubulin (via 60S subunit 28S rRNA and protein uL24/RPL26) and the N-terminal of nascent tubulin polypeptide (via alpha-tubulin MREC motif and beta-tubulin MREI motif); these interactions result in tubulin mRNA-targeted degradation. Interacts with ATP5F1B; the interaction occurs in the mitochondria and results in ATP production decrease. Interacts with p53/TP53; the interaction occurs in the mitochondria and results in increased apoptosis. Phosphorylation by ATM kinase induces nuclear accumulation while interfering with nuclear export, and phosphorylation by CHEK2 kinase enhances nuclear stability.

Its subcellular location is the nucleus. The protein resides in the cytoplasm. It is found in the cytoplasmic vesicle. It localises to the mitochondrion matrix. Cofactor involved in the regulation of various cellular mechanisms such as actin regulation, autophagy, chromatin regulation and DNA repair. In physiological conditions, interacts with cofactor JMY in the cytoplasm which prevents JMY's actin nucleation activity and ability to activate the Arp2/3 complex. Acts as a negative regulator of nutrient stress-induced autophagy by inhibiting JMY's interaction with MAP1LC3B, thereby preventing autophagosome formation. Involves in tubulin autoregulation by promoting its degradation in response to excess soluble tubulin. To do so, associates with the active ribosome near the ribosome exit tunnel and with nascent tubulin polypeptides early during their translation, triggering tubulin mRNA-targeted degradation. Following DNA damage, phosphorylated by DNA damage responsive protein kinases ATM and CHEK2, leading to its nuclear accumulation and stability. Nuclear TTC5/STRAP promotes the assembly of a stress-responsive p53/TP53 coactivator complex, which includes the coactivators JMY and p300, thereby increasing p53/TP53-dependent transcription and apoptosis. Also recruits arginine methyltransferase PRMT5 to p53/TP53 when DNA is damaged, allowing PRMT5 to methylate p53/TP53. In DNA stress conditions, also prevents p53/TP53 degradation by E3 ubiquitin ligase MDM2. Upon heat-shock stress, forms a chromatin-associated complex with heat-shock factor 1 HSF1 and p300/EP300 to stimulate heat-shock-responsive transcription, thereby increasing cell survival. Mitochondrial TTC5/STRAP interacts with ATP synthase subunit beta ATP5F1B which decreased ATP synthase activity and lowers mitochondrial ATP production, thereby regulating cellular respiration and mitochondrial-dependent apoptosis. Mitochondrial TTC5/STRAP also regulates p53/TP53-mediated apoptosis. The chain is Tetratricopeptide repeat protein 5 (TTC5) from Bos taurus (Bovine).